A 273-amino-acid polypeptide reads, in one-letter code: MHDANIRVAIAGAGGRMGRQLIQAALALEGVQLGAALEREGSSLLGSDAGELAGAGKTGVTVQSSLDAIKDDFDVFIDFTRPEGTLNHLAFCRQHGKGMVIGTTGFDEAGKQAIRDAAADIAIVFAANFSVGVNVMLKLLEKAAKVMGDYTDIEIIEAHHRHKVDAPSGTALAMGEAIAHALDKDLKDCAVYSREGHTGERVPGTIGFATVRAGDIVGEHTAMFADIGERLEITHKASSRMTFANGAVRSALWLSGKESGLFDMRDVLDLNNL.

NAD(+)-binding positions include 12–17 and Glu-38; that span reads GAGGRM. Arg-39 serves as a coordination point for NADP(+). NAD(+)-binding positions include 102 to 104 and 126 to 129; these read GTT and AANF. The active-site Proton donor/acceptor is His-159. (S)-2,3,4,5-tetrahydrodipicolinate is bound at residue His-160. Lys-163 acts as the Proton donor in catalysis. Residue 169-170 coordinates (S)-2,3,4,5-tetrahydrodipicolinate; it reads GT.

It belongs to the DapB family. As to quaternary structure, homotetramer.

The protein localises to the cytoplasm. It catalyses the reaction (S)-2,3,4,5-tetrahydrodipicolinate + NAD(+) + H2O = (2S,4S)-4-hydroxy-2,3,4,5-tetrahydrodipicolinate + NADH + H(+). The enzyme catalyses (S)-2,3,4,5-tetrahydrodipicolinate + NADP(+) + H2O = (2S,4S)-4-hydroxy-2,3,4,5-tetrahydrodipicolinate + NADPH + H(+). It functions in the pathway amino-acid biosynthesis; L-lysine biosynthesis via DAP pathway; (S)-tetrahydrodipicolinate from L-aspartate: step 4/4. Its function is as follows. Catalyzes the conversion of 4-hydroxy-tetrahydrodipicolinate (HTPA) to tetrahydrodipicolinate. In Shigella flexneri, this protein is 4-hydroxy-tetrahydrodipicolinate reductase.